We begin with the raw amino-acid sequence, 517 residues long: tRNA-2-methylthio-N(6)-dimethylallyladenosine synthase (517 aa).

Positions 18–137 constitute an MTTase N-terminal domain; sequence RTYQVRTYGC…LPTLLDRARH (120 aa). 6 residues coordinate [4Fe-4S] cluster: C27, C66, C100, C174, C178, and C181. In terms of domain architecture, Radical SAM core spans 160 to 397; the sequence is RESDYAAWVS…ELQEQICMEE (238 aa). The 72-residue stretch at 399–470 folds into the TRAM domain; that stretch reads RVLIGRIVEL…PHHLIADAGI (72 aa).

The protein belongs to the methylthiotransferase family. MiaB subfamily. In terms of assembly, monomer. It depends on [4Fe-4S] cluster as a cofactor.

The protein localises to the cytoplasm. The enzyme catalyses N(6)-dimethylallyladenosine(37) in tRNA + (sulfur carrier)-SH + AH2 + 2 S-adenosyl-L-methionine = 2-methylsulfanyl-N(6)-dimethylallyladenosine(37) in tRNA + (sulfur carrier)-H + 5'-deoxyadenosine + L-methionine + A + S-adenosyl-L-homocysteine + 2 H(+). Its function is as follows. Catalyzes the methylthiolation of N6-(dimethylallyl)adenosine (i(6)A), leading to the formation of 2-methylthio-N6-(dimethylallyl)adenosine (ms(2)i(6)A) at position 37 in tRNAs that read codons beginning with uridine. This Mycobacterium leprae (strain TN) protein is tRNA-2-methylthio-N(6)-dimethylallyladenosine synthase.